Reading from the N-terminus, the 148-residue chain is Cytochrome c-type biogenesis protein CcmE (148 aa).

Residues 1 to 7 (MKPRNRR) lie on the Cytoplasmic side of the membrane. Residues 8-28 (IALIVAGLSALGIATALVLNA) form a helical; Signal-anchor for type II membrane protein membrane-spanning segment. Residues 29 to 148 (FQSNLVFFFT…VQKKPASRKP (120 aa)) are Periplasmic-facing. Heme-binding residues include histidine 123 and tyrosine 127. Residues 128 to 148 (MPPEAQHALDEVQKKPASRKP) are disordered.

It belongs to the CcmE/CycJ family.

It localises to the cell inner membrane. Functionally, heme chaperone required for the biogenesis of c-type cytochromes. Transiently binds heme delivered by CcmC and transfers the heme to apo-cytochromes in a process facilitated by CcmF and CcmH. In Pseudomonas aeruginosa, this protein is Cytochrome c-type biogenesis protein CcmE.